Reading from the N-terminus, the 295-residue chain is Fructose-bisphosphate aldolase class 1 (295 aa).

Catalysis depends on glutamate 176, which acts as the Proton acceptor. Catalysis depends on lysine 213, which acts as the Schiff-base intermediate with dihydroxyacetone-P.

It belongs to the class I fructose-bisphosphate aldolase family.

The catalysed reaction is beta-D-fructose 1,6-bisphosphate = D-glyceraldehyde 3-phosphate + dihydroxyacetone phosphate. It functions in the pathway carbohydrate degradation; glycolysis; D-glyceraldehyde 3-phosphate and glycerone phosphate from D-glucose: step 4/4. In Clostridium acetobutylicum (strain ATCC 824 / DSM 792 / JCM 1419 / IAM 19013 / LMG 5710 / NBRC 13948 / NRRL B-527 / VKM B-1787 / 2291 / W), this protein is Fructose-bisphosphate aldolase class 1.